Consider the following 745-residue polypeptide: Jacalin-related lectin 4 (745 aa).

5 consecutive Jacalin-type lectin domains span residues 2–148 (AQKL…YFAP), 151–294 (PTKF…YFSP), 307–448 (AEKL…YFVT), 451–594 (PTKF…YFSR), and 601–744 (AETL…YVMP).

This sequence belongs to the jacalin lectin family.

The polypeptide is Jacalin-related lectin 4 (JAL4) (Arabidopsis thaliana (Mouse-ear cress)).